Consider the following 234-residue polypeptide: Ubiquinone biosynthesis O-methyltransferase (234 aa).

The S-adenosyl-L-methionine site is built by Arg39, Gly59, Asp80, and Met124.

This sequence belongs to the methyltransferase superfamily. UbiG/COQ3 family.

It catalyses the reaction a 3-demethylubiquinol + S-adenosyl-L-methionine = a ubiquinol + S-adenosyl-L-homocysteine + H(+). The catalysed reaction is a 3-(all-trans-polyprenyl)benzene-1,2-diol + S-adenosyl-L-methionine = a 2-methoxy-6-(all-trans-polyprenyl)phenol + S-adenosyl-L-homocysteine + H(+). Its pathway is cofactor biosynthesis; ubiquinone biosynthesis. Functionally, O-methyltransferase that catalyzes the 2 O-methylation steps in the ubiquinone biosynthetic pathway. This Aliivibrio fischeri (strain MJ11) (Vibrio fischeri) protein is Ubiquinone biosynthesis O-methyltransferase.